We begin with the raw amino-acid sequence, 194 residues long: Peptidyl-tRNA hydrolase (194 aa).

Residue Tyr-16 participates in tRNA binding. His-21 acts as the Proton acceptor in catalysis. Residues Tyr-67, Asn-69, and Asn-115 each contribute to the tRNA site.

Belongs to the PTH family. In terms of assembly, monomer.

The protein resides in the cytoplasm. It carries out the reaction an N-acyl-L-alpha-aminoacyl-tRNA + H2O = an N-acyl-L-amino acid + a tRNA + H(+). Functionally, hydrolyzes ribosome-free peptidyl-tRNAs (with 1 or more amino acids incorporated), which drop off the ribosome during protein synthesis, or as a result of ribosome stalling. In terms of biological role, catalyzes the release of premature peptidyl moieties from peptidyl-tRNA molecules trapped in stalled 50S ribosomal subunits, and thus maintains levels of free tRNAs and 50S ribosomes. This Synechocystis sp. (strain ATCC 27184 / PCC 6803 / Kazusa) protein is Peptidyl-tRNA hydrolase.